Consider the following 197-residue polypeptide: dITP/XTP pyrophosphatase (197 aa).

Position 8 to 13 (8 to 13 (TGNAGK)) interacts with substrate. Residues glutamate 40 and aspartate 69 each coordinate Mg(2+). Catalysis depends on aspartate 69, which acts as the Proton acceptor. Residues serine 70, 154–157 (FGYD), lysine 177, and 182–183 (HR) contribute to the substrate site.

The protein belongs to the HAM1 NTPase family. In terms of assembly, homodimer. The cofactor is Mg(2+).

It catalyses the reaction XTP + H2O = XMP + diphosphate + H(+). The enzyme catalyses dITP + H2O = dIMP + diphosphate + H(+). The catalysed reaction is ITP + H2O = IMP + diphosphate + H(+). Functionally, pyrophosphatase that catalyzes the hydrolysis of nucleoside triphosphates to their monophosphate derivatives, with a high preference for the non-canonical purine nucleotides XTP (xanthosine triphosphate), dITP (deoxyinosine triphosphate) and ITP. Seems to function as a house-cleaning enzyme that removes non-canonical purine nucleotides from the nucleotide pool, thus preventing their incorporation into DNA/RNA and avoiding chromosomal lesions. This Salmonella typhi protein is dITP/XTP pyrophosphatase (rdgB).